Reading from the N-terminus, the 187-residue chain is Adenylate kinase (187 aa).

Glycine 10–threonine 15 lines the ATP pocket. Residues serine 30–valine 59 are NMP. Residues threonine 31, arginine 36, aspartate 57–valine 59, glycine 85–arginine 88, and glutamine 92 each bind AMP. The segment at glycine 126–aspartate 136 is LID. ATP is bound at residue arginine 127. AMP is bound by residues arginine 133 and arginine 144. Glycine 172 serves as a coordination point for ATP.

This sequence belongs to the adenylate kinase family. As to quaternary structure, monomer.

It is found in the cytoplasm. The catalysed reaction is AMP + ATP = 2 ADP. It functions in the pathway purine metabolism; AMP biosynthesis via salvage pathway; AMP from ADP: step 1/1. In terms of biological role, catalyzes the reversible transfer of the terminal phosphate group between ATP and AMP. Plays an important role in cellular energy homeostasis and in adenine nucleotide metabolism. This Xylella fastidiosa (strain 9a5c) protein is Adenylate kinase.